The primary structure comprises 153 residues: Troponin C (153 aa).

4 EF-hand domains span residues 9-44, 45-80, 85-120, and 121-153; these read EQVQ…LGQT, FEEN…FLVE, AMQE…LDDK, and LTED…MTGD. Residues Asp-58, Asp-60, Ser-62, Glu-64, and Glu-69 each coordinate Ca(2+). Asp-134, Asp-136, Ser-138, Thr-140, and Glu-145 together coordinate Ca(2+).

This sequence belongs to the troponin C family.

Functionally, troponin is the central regulatory protein of striated muscle contraction. Tn consists of three components: Tn-I which is the inhibitor of actomyosin ATPase, Tn-T which contains the binding site for tropomyosin and Tn-C. The binding of calcium to Tn-C abolishes the inhibitory action of Tn on actin filaments. This chain is Troponin C, found in Tyrophagus putrescentiae (Mold mite).